Here is a 736-residue protein sequence, read N- to C-terminus: Glycogen [starch] synthase, muscle (736 aa).

Phosphoserine; by AMPK and PKA is present on S8. S11 is subject to Phosphoserine. K39 lines the UDP pocket. Residues H205 and R211 each contribute to the UDP-alpha-D-glucose site. H291, E292, Q294, H297, and K301 together coordinate alpha-D-glucose 6-phosphate. Position 331 (R331) interacts with UDP. R331 provides a ligand contact to UDP-alpha-D-glucose. Phosphoserine is present on S412. Residue H501 participates in alpha-D-glucose 6-phosphate binding. UDP-alpha-D-glucose is bound by residues E510, W512, and G513. UDP is bound at residue T515. Alpha-D-glucose 6-phosphate contacts are provided by R582 and R586. The disordered stretch occupies residues 631–736 (TQGYRYPRPA…PASSLGEERN (106 aa)). Phosphoserine; by DYRK2, GSK3-alpha, GSK3-beta and PASK is present on S641. Phosphoserine; by GSK3-alpha and GSK3-beta occurs at positions 645 and 649. Phosphoserine is present on S652. A Phosphoserine; by GSK3-alpha and GSK3-beta modification is found at S653. S657 bears the Phosphoserine; by CK2 mark. Positions 658 to 681 (EDEEEPRDLPPDEDDERYDEDEEA) are enriched in acidic residues. A compositionally biased stretch (basic and acidic residues) spans 682–695 (AKDRRNIRAPEWPR). S698 carries the post-translational modification Phosphoserine. A Phosphothreonine modification is found at T700. S709 bears the Phosphoserine mark. A compositionally biased stretch (low complexity) spans 714–727 (PSSSVSTPSEPLSP). At T720 the chain carries Phosphothreonine. Residues S726 and S730 each carry the phosphoserine modification.

This sequence belongs to the glycosyltransferase 3 family. In terms of assembly, part of the GYS1-GYG1 complex, a heterooctamer composed of a tetramer of GYS1 and 2 dimers of GYG1, where each GYS1 protomer binds to one GYG1 subunit (via GYG1 C-terminus); the GYS1 tetramer may dissociate from GYG1 dimers to continue glycogen polymerization on its own. Post-translationally, phosphorylation at Ser-8 by AMPK inactivates the enzyme activity. Primed phosphorylation at Ser-657 (site 5) by CSNK2A1 and CSNK2A2 is required for inhibitory phosphorylation at Ser-641 (site 3a), Ser-645 (site 3b), Ser-649 (site 3c) and Ser-653 (site 4) by GSK3A an GSK3B. Phosphorylated at Ser-641 by PASK, leading to inactivation; phosphorylation by PASK is inhibited by glycogen. Phosphorylated at Ser-641 by DYRK2, leading to inactivation. Dephosphorylation at Ser-641 and Ser-645 by PP1 activates the enzyme.

The enzyme catalyses [(1-&gt;4)-alpha-D-glucosyl](n) + UDP-alpha-D-glucose = [(1-&gt;4)-alpha-D-glucosyl](n+1) + UDP + H(+). Its pathway is glycan biosynthesis; glycogen biosynthesis. Its activity is regulated as follows. Allosteric activation by glucose-6-phosphate. Phosphorylation reduces the activity towards UDP-glucose. When in the non-phosphorylated state, glycogen synthase does not require glucose-6-phosphate as an allosteric activator; when phosphorylated it does. Glycogen synthase participates in the glycogen biosynthetic process along with glycogenin and glycogen branching enzyme. Extends the primer composed of a few glucose units formed by glycogenin by adding new glucose units to it. In this context, glycogen synthase transfers the glycosyl residue from UDP-Glc to the non-reducing end of alpha-1,4-glucan. This chain is Glycogen [starch] synthase, muscle (GYS1), found in Bos taurus (Bovine).